We begin with the raw amino-acid sequence, 107 residues long: Large ribosomal subunit protein P1 (107 aa).

Residues 67 to 107 (GAAPAAAAPAAGGAPAAGAAPKKEEKKEPSEEEDMGFSLFD) form a disordered region. A compositionally biased stretch (low complexity) spans 69–86 (APAAAAPAAGGAPAAGAA).

The protein belongs to the eukaryotic ribosomal protein P1/P2 family. In terms of assembly, P1 and P2 exist as dimers at the large ribosomal subunit.

Functionally, plays an important role in the elongation step of protein synthesis. The chain is Large ribosomal subunit protein P1 from Chlamydomonas reinhardtii (Chlamydomonas smithii).